Reading from the N-terminus, the 596-residue chain is MKHIRNFSIIAHIDHGKSTLSDRLIQVCGGLTDREMAEQVLDSMDLERERGITIKAQSVTLDYTAKNGETYQLNFIDTPGHVDFSYEVSRSLAACEGALLVVDAGQGVEAQTLANCYTALEMDLEVVPVLNKIDLPQAEPERVAAEIEDIVGIEATDAVRCSAKTGVGIGEVLETIVAQIPSPEGDPEAPLQALIIDSWFDSYLGVVSLVRIKNGVLKKGDKFKVMSTGQAYNADRVGIFTPKMKDQAELKTGQVGYVIAGIKEIHGAPVGDTLTLAKHGADKPLPGFKKAKPQVYAGVFTISTDDYESFRDALNKLSLNDASLQFEPETSSALGFGFRIGYLGLLHMEIIQERLEREYDLDLITTAPTVEYEVLLTNGETLYVDNPSDLPATNYIEEMREPIVQANILVPKEYLGNVITLCIEKRGVQKNMVYHGNQVALTYDIPAAEVVMDFFDRLKSTSRGYASLEYNFIRFEPADMVRLDVLINGDRVDALAMIIHRSNIRHKGIALVDKMKELIPRQMFDIAIQAAVGNQVVARSTVKALRKDVTAKCYGGDVSRKKKLLQKQKEGKKRMKQLGNVEVPQEAFLAVLKLNE.

The region spanning 2-184 is the tr-type G domain; it reads KHIRNFSIIA…TIVAQIPSPE (183 aa). GTP contacts are provided by residues 14–19 and 131–134; these read DHGKST and NKID.

It belongs to the TRAFAC class translation factor GTPase superfamily. Classic translation factor GTPase family. LepA subfamily.

The protein localises to the cell inner membrane. It catalyses the reaction GTP + H2O = GDP + phosphate + H(+). Required for accurate and efficient protein synthesis under certain stress conditions. May act as a fidelity factor of the translation reaction, by catalyzing a one-codon backward translocation of tRNAs on improperly translocated ribosomes. Back-translocation proceeds from a post-translocation (POST) complex to a pre-translocation (PRE) complex, thus giving elongation factor G a second chance to translocate the tRNAs correctly. Binds to ribosomes in a GTP-dependent manner. This Shewanella amazonensis (strain ATCC BAA-1098 / SB2B) protein is Elongation factor 4.